We begin with the raw amino-acid sequence, 405 residues long: Putative colanic acid polymerase (405 aa).

11 helical membrane-spanning segments follow: residues 5 to 25, 27 to 47, 55 to 75, 81 to 101, 117 to 137, 171 to 191, 204 to 224, 244 to 264, 282 to 302, 327 to 347, and 376 to 396; these read IRICSYLLLPLIYLLVNVKIA, LGESFPITIVTFLPVLLLLFL, LMIALGIGAGLTAFNYLFGQS, YVTSTMLFVYIVIIIGMVWSI, FFYLVVGLVVALAAVEMAQII, TALYFEPAFFALALISIWLSI, MILAGIILSGSFSGVMTFILF, PLALISLAVFLVGVVIAFPYI, IVGPLVMVGYSLTHIDGVVRF, GLYLLIIYFSWFAVFLSLWYM, and LFFTGSIFSPEYAFLIVCPFI.

It is found in the cell inner membrane. It participates in slime biogenesis; slime polysaccharide biosynthesis. This Escherichia coli (strain K12) protein is Putative colanic acid polymerase (wcaD).